The sequence spans 1100 residues: DNA-directed RNA polymerase subunit beta (1100 aa).

The interval 1064–1100 (YEEDKEVDLMADVNQRRTPSRPTYESMSVGDIDDDDD) is disordered. The span at 1079–1089 (RRTPSRPTYES) shows a compositional bias: polar residues.

Belongs to the RNA polymerase beta chain family. In terms of assembly, in cyanobacteria the RNAP catalytic core is composed of 2 alpha, 1 beta, 1 beta', 1 gamma and 1 omega subunit. When a sigma factor is associated with the core the holoenzyme is formed, which can initiate transcription.

The catalysed reaction is RNA(n) + a ribonucleoside 5'-triphosphate = RNA(n+1) + diphosphate. In terms of biological role, DNA-dependent RNA polymerase catalyzes the transcription of DNA into RNA using the four ribonucleoside triphosphates as substrates. This Synechococcus sp. (strain ATCC 27144 / PCC 6301 / SAUG 1402/1) (Anacystis nidulans) protein is DNA-directed RNA polymerase subunit beta.